The chain runs to 215 residues: MAKSASNQLRVTVRTETGKGASRRARRAGKIPAVLYGHGAEPQHLELPGHDYAAVLRHSGTNAVLTLDIAGKEQLALTKALHIHPIRRTIQHADLLVVRRGEKVVVEVSVVVEGQAGPDTLVTQETNSIEIEAEALSIPEQLTVSIEGAEPGTQLTAGQIALPAGVSLISDPDLLVVNVVKAPTAEELEGEVAGAEEAEEAAVEAGEAEAAGESE.

Polar residues predominate over residues 1–10; it reads MAKSASNQLR. Disordered stretches follow at residues 1 to 25 and 187 to 215; these read MAKS…SRRA and ELEG…GESE.

The protein belongs to the bacterial ribosomal protein bL25 family. CTC subfamily. As to quaternary structure, part of the 50S ribosomal subunit; part of the 5S rRNA/L5/L18/L25 subcomplex. Contacts the 5S rRNA. Binds to the 5S rRNA independently of L5 and L18.

In terms of biological role, this is one of the proteins that binds to the 5S RNA in the ribosome where it forms part of the central protuberance. This chain is Large ribosomal subunit protein bL25, found in Mycobacterium bovis (strain ATCC BAA-935 / AF2122/97).